A 274-amino-acid polypeptide reads, in one-letter code: Rhamnulose-1-phosphate aldolase (274 aa).

E117 is a catalytic residue. The Zn(2+) site is built by H141, H143, and H212.

The protein belongs to the aldolase class II family. RhaD subfamily. As to quaternary structure, homotetramer. Zn(2+) is required as a cofactor.

It localises to the cytoplasm. It catalyses the reaction L-rhamnulose 1-phosphate = (S)-lactaldehyde + dihydroxyacetone phosphate. It functions in the pathway carbohydrate degradation; L-rhamnose degradation; glycerone phosphate from L-rhamnose: step 3/3. Functionally, catalyzes the reversible cleavage of L-rhamnulose-1-phosphate to dihydroxyacetone phosphate (DHAP) and L-lactaldehyde. The polypeptide is Rhamnulose-1-phosphate aldolase (Yersinia pestis).